A 558-amino-acid chain; its full sequence is Putative ABC transporter ATP-binding protein SAG1633 (558 aa).

ABC transporter domains are found at residues 5 to 246 (IEWK…GIRE) and 295 to 527 (LSVQ…THLK). Residues 39 to 46 (GPSGSGKS) and 328 to 335 (GKNGAGKS) each bind ATP.

Belongs to the ABC transporter superfamily.

It localises to the cell membrane. Functionally, probably part of an ABC transporter complex. Responsible for energy coupling to the transport system. The sequence is that of Putative ABC transporter ATP-binding protein SAG1633 from Streptococcus agalactiae serotype V (strain ATCC BAA-611 / 2603 V/R).